Here is a 152-residue protein sequence, read N- to C-terminus: Regulator of G-protein signaling 21 (152 aa).

Residues 21–137 enclose the RGS domain; the sequence is NMDTLLANQA…LKSEIYKKLV (117 aa).

As to expression, expressed ubiquitously.

Functionally, inhibits signal transduction by increasing the GTPase activity of G protein alpha subunits thereby driving them into their inactive GDP-bound form. In Homo sapiens (Human), this protein is Regulator of G-protein signaling 21 (RGS21).